Consider the following 125-residue polypeptide: Large ribosomal subunit protein bL12 (125 aa).

This sequence belongs to the bacterial ribosomal protein bL12 family. As to quaternary structure, homodimer. Part of the ribosomal stalk of the 50S ribosomal subunit. Forms a multimeric L10(L12)X complex, where L10 forms an elongated spine to which 2 to 4 L12 dimers bind in a sequential fashion. Binds GTP-bound translation factors.

In terms of biological role, forms part of the ribosomal stalk which helps the ribosome interact with GTP-bound translation factors. Is thus essential for accurate translation. The polypeptide is Large ribosomal subunit protein bL12 (Anaeromyxobacter dehalogenans (strain 2CP-1 / ATCC BAA-258)).